Here is a 148-residue protein sequence, read N- to C-terminus: Fibroblast growth factor 1 (148 aa).

A propeptide spanning residues 1–11 (EITTFAALTER) is cleaved from the precursor. Asn-29 is a binding site for heparin. The interval 123–139 (KKNGKTKLGSRTHFGQK) is heparin-binding.

The protein belongs to the heparin-binding growth factors family.

The protein localises to the secreted. The protein resides in the cytoplasm. It localises to the cell cortex. Its subcellular location is the cytosol. It is found in the nucleus. Plays an important role in the regulation of cell survival, cell division, angiogenesis, cell differentiation and cell migration. Functions as a potent mitogen in vitro. Acts as a ligand for FGFR1 and integrins. Binds to FGFR1 in the presence of heparin leading to FGFR1 dimerization and activation via sequential autophosphorylation on tyrosine residues which act as docking sites for interacting proteins, leading to the activation of several signaling cascades. Binds to integrins. Its binding to integrins and subsequent ternary complex formation with integrins and FGFR1 are essential for FGF1 signaling. The chain is Fibroblast growth factor 1 (fgf1) from Cynops pyrrhogaster (Japanese fire-bellied newt).